An 800-amino-acid chain; its full sequence is Putative antiporter subunit mnhA2 (800 aa).

Transmembrane regions (helical) follow at residues 1-21 (MSLV…LLTS), 33-53 (IALT…PSVI), 78-98 (GLSL…FFYA), 118-138 (LFMF…MYVF), 167-187 (FMIT…LYIM), 207-227 (ALFI…SAQF), 241-261 (TPVS…FLLL), 273-293 (YIYI…ITAL), 300-320 (GILA…VGIG), 331-351 (IASI…NHAI), 387-407 (LVMM…GFLS), 424-444 (FSLI…IFTF), 472-492 (PWLF…IFFV), 527-547 (GFNI…VLAI), 595-615 (IIMT…RIGL), 627-647 (GPLE…LIFI), 651-671 (LTMV…FIAM), 676-696 (LALT…VSFS), 712-732 (IIKI…IFIA), and 768-788 (LDTL…YTLL).

It belongs to the CPA3 antiporters (TC 2.A.63) subunit A family. In terms of assembly, may form a heterooligomeric complex that consists of seven subunits: mnhA2, mnhB2, mnhC2, mnhD2, mnhE2, mnhF2 and mnhG2.

The protein resides in the cell membrane. This Staphylococcus aureus (strain MRSA252) protein is Putative antiporter subunit mnhA2 (mnhA2).